Reading from the N-terminus, the 402-residue chain is Tryptophan--tRNA ligase, cytoplasmic (402 aa).

A 'HIGH' region motif is present at residues 97–106 (PSSEALHLGH). A 'KMSKS' region motif is present at residues 280–284 (KMSAS).

The protein belongs to the class-I aminoacyl-tRNA synthetase family.

It localises to the cytoplasm. Its subcellular location is the cytosol. It carries out the reaction tRNA(Trp) + L-tryptophan + ATP = L-tryptophyl-tRNA(Trp) + AMP + diphosphate + H(+). The protein is Tryptophan--tRNA ligase, cytoplasmic of Arabidopsis thaliana (Mouse-ear cress).